The sequence spans 1377 residues: Protein RhsA (1377 aa).

Repeat copies occupy residues 330 to 352 (GKQV…HRHT), 353 to 374 (GRPE…LNPA), 375 to 417 (GLSY…EHAD), 418 to 438 (GSVT…TDAA), 439 to 460 (GRTT…TTPD), 461 to 481 (GRAS…TGPD), 482 to 502 (GLEL…TAPD), 503 to 525 (GDIT…EDAT), 526 to 546 (GSRK…TDCS), 547 to 567 (GYVT…HREE), 568 to 588 (GLSQ…KDTQ), 589 to 609 (GHET…IAPD), 610 to 629 (GSRN…TTQG), 630 to 650 (GLTR…TSEN), 651 to 671 (GSHT…TGFD), 672 to 691 (GRTQ…SEDE), 692 to 711 (GLVT…RTVK), 712 to 734 (GETA…HISE), 735 to 758 (GHRV…QTVH), 808 to 828 (GDTP…LRSF), 829 to 850 (GRYE…HLNS), 851 to 871 (LLSD…ISSP), 872 to 894 (RQTR…TAAN), 895 to 930 (LDIR…NRIA), 931 to 959 (RDAH…VIRT), 960 to 984 (DDER…TQYE), 985 to 1019 (EPLV…MSLS), and 1162 to 1186 (GTTE…HQLQ). Residues 330–1186 (GKQVRSFTYD…LNEENPHQLQ (857 aa)) form a 28 X approximate tandem repeats region. The segment at 1356 to 1377 (DAKSTQKAWNCRHSRQSNDKKR) is disordered.

This sequence belongs to the RHS family.

In terms of biological role, rhs elements have a nonessential function. They may play an important role in the natural ecology of the cell. This is Protein RhsA (rhsA) from Escherichia coli (strain K12).